The primary structure comprises 276 residues: Chlorophyll a-b binding protein CP29.3, chloroplastic (276 aa).

The transit peptide at 1–29 (MATTTAAAASGIFGIRIQDPRPGTGRVQA) directs the protein to the chloroplast. The segment at 1–53 (MATTTAAAASGIFGIRIQDPRPGTGRVQARFGFSFGKKKPAPPPKKSRQVQDD) is disordered. Residues 36-48 (GKKKPAPPPKKSR) show a composition bias toward basic residues. A chlorophyll b-binding site is contributed by Trp-59. Positions 79, 141, and 144 each coordinate chlorophyll a. The chain crosses the membrane as a helical span at residues 147–167 (WAMLGTLGAIAVEALTGIAWQ). Chlorophyll a is bound at residue Leu-181. The helical transmembrane segment at 185-205 (LPFSLTTLIWIEVLVVGYIEF) threads the bilayer. The chlorophyll b site is built by Glu-204 and Arg-207. Chlorophyll a contacts are provided by Glu-242, His-245, Arg-247, and Gln-259. Residues 248 to 268 (LAMVAFLIFALQAAFTGKGPV) traverse the membrane as a helical segment.

This sequence belongs to the light-harvesting chlorophyll a/b-binding (LHC) protein family. The LHC complex consists of chlorophyll a-b binding proteins. The cofactor is Binds at least 14 chlorophylls (8 Chl-a and 6 Chl-b) and carotenoids such as lutein and neoxanthin.. Post-translationally, photoregulated by reversible phosphorylation of its threonine residues.

The protein localises to the plastid. It localises to the chloroplast thylakoid membrane. The light-harvesting complex (LHC) functions as a light receptor, it captures and delivers excitation energy to photosystems with which it is closely associated. The protein is Chlorophyll a-b binding protein CP29.3, chloroplastic (LHCB4.3) of Arabidopsis thaliana (Mouse-ear cress).